The following is a 270-amino-acid chain: Tetraspanin-17 (270 aa).

At 1-19 the chain is on the cytoplasmic side; it reads MPGKHQHFQEPEVGCCGKY. Residues 20–40 form a helical membrane-spanning segment; sequence FLFGFNIVFWVLGALFLAIGL. The Extracellular portion of the chain corresponds to 41-63; the sequence is WAWSEKGVLSNISALTDLGGLDP. A glycan (N-linked (GlcNAc...) asparagine) is linked at N51. A helical transmembrane segment spans residues 64–84; that stretch reads VWLFVVVGGVMSVLGFAGCIG. The Cytoplasmic segment spans residues 85–94; it reads ALRENTFLLK. The helical transmembrane segment at 95-115 threads the bilayer; sequence FFSVFLGLIFFLELATGILAF. The Extracellular portion of the chain corresponds to 116 to 234; the sequence is VFKDWIRDQL…GQFEKWLQDN (119 aa). Intrachain disulfides connect C155–C223, C156–C188, C172–C182, and C189–C202. N171 is a glycosylation site (N-linked (GlcNAc...) asparagine). A helical transmembrane segment spans residues 235–255; sequence LIVVAGVFVGIALLQIFGICL. Residues 256-270 are Cytoplasmic-facing; it reads AQNLVSDIKAVKANW.

It belongs to the tetraspanin (TM4SF) family. As to quaternary structure, interacts with ADAM10; the interaction influences ADAM10 substrate specificity, endocytosis and turnover.

It localises to the cell membrane. Functionally, part of TspanC8 subgroup, composed of 6 members that interact with the transmembrane metalloprotease ADAM10. This interaction is required for ADAM10 exit from the endoplasmic reticulum and for enzymatic maturation and trafficking to the cell surface as well as substrate specificity. Different TspanC8/ADAM10 complexes have distinct substrates. Seems to regulate VE-cadherin expression in endothelial cells probably through interaction with ADAM10, promoting leukocyte transmigration. The sequence is that of Tetraspanin-17 (TSPAN17) from Bos taurus (Bovine).